Reading from the N-terminus, the 436-residue chain is Prenyltransferase nscD (436 aa).

Belongs to the tryptophan dimethylallyltransferase family.

It functions in the pathway secondary metabolite biosynthesis. Functionally, prenyltransferase; part of the gene cluster that mediates the biosynthesis of neosartoricin B, a prenylated anthracenone that probably exhibits T-cell antiproliferative activity, suggestive of a physiological role as an immunosuppressive agent. The non-reducing polyketide synthase nscA probably synthesizes and cyclizes the decaketide backbone. The hydrolase nscB then mediates the product release through hydrolysis followed by spontaneous decarboxylation. The prenyltransferase nscD catalyzes the addition of the dimethylallyl group to the aromatic C5. The FAD-dependent monooxygenase nscC is then responsible for the stereospecific hydroxylation at C2. Neosartoricin B can be converted into two additional compounds neosartoricins C and D. Neosartoricin C is a spirocyclic compound that is cyclized through the attack of C3 hydroxyl on C14, followed by dehydration. On the other hand, neosartoricin D is a further cyclized compound in which attack of C2 on C14 in neosartoricin C results in the formation of the acetal-containing dioxabicyclo-octanone ring. Both of these compounds are novel and possibly represent related metabolites of the gene cluster. The protein is Prenyltransferase nscD of Trichophyton equinum (strain ATCC MYA-4606 / CBS 127.97) (Horse ringworm fungus).